A 449-amino-acid chain; its full sequence is Phosphoglucosamine mutase (449 aa).

The active-site Phosphoserine intermediate is Ser-100. Mg(2+) is bound by residues Ser-100, Asp-241, Asp-243, and Asp-245. The residue at position 100 (Ser-100) is a Phosphoserine.

The protein belongs to the phosphohexose mutase family. Mg(2+) serves as cofactor. In terms of processing, activated by phosphorylation.

The catalysed reaction is alpha-D-glucosamine 1-phosphate = D-glucosamine 6-phosphate. Catalyzes the conversion of glucosamine-6-phosphate to glucosamine-1-phosphate. The chain is Phosphoglucosamine mutase from Clostridium botulinum (strain 657 / Type Ba4).